The primary structure comprises 333 residues: Ribosomal RNA small subunit methyltransferase H (333 aa).

Residues 34–36, Asp59, Phe86, Asp112, and Gln119 each bind S-adenosyl-L-methionine; that span reads GGH.

It belongs to the methyltransferase superfamily. RsmH family.

Its subcellular location is the cytoplasm. It carries out the reaction cytidine(1402) in 16S rRNA + S-adenosyl-L-methionine = N(4)-methylcytidine(1402) in 16S rRNA + S-adenosyl-L-homocysteine + H(+). Its function is as follows. Specifically methylates the N4 position of cytidine in position 1402 (C1402) of 16S rRNA. The chain is Ribosomal RNA small subunit methyltransferase H from Prosthecochloris aestuarii (strain DSM 271 / SK 413).